We begin with the raw amino-acid sequence, 88 residues long: Acylphosphatase (88 aa).

Residues Ala-3 to Gly-88 form the Acylphosphatase-like domain. Residues Arg-18 and Asn-36 contribute to the active site.

It belongs to the acylphosphatase family.

The catalysed reaction is an acyl phosphate + H2O = a carboxylate + phosphate + H(+). In Xanthomonas campestris pv. campestris (strain 8004), this protein is Acylphosphatase (acyP).